The sequence spans 113 residues: Cell cycle protein GpsB (113 aa).

Residues 36 to 65 (IKDYETYAALVKSLRQEIADLKEELARKPQ) are a coiled coil. The segment at 61–82 (ARKPQVSSAPSPSHPDPIDVAA) is disordered.

It belongs to the GpsB family. Forms polymers through the coiled coil domains. Interacts with PBP1, MreC and EzrA.

The protein localises to the cytoplasm. Functionally, divisome component that associates with the complex late in its assembly, after the Z-ring is formed, and is dependent on DivIC and PBP2B for its recruitment to the divisome. Together with EzrA, is a key component of the system that regulates PBP1 localization during cell cycle progression. Its main role could be the removal of PBP1 from the cell pole after pole maturation is completed. Also contributes to the recruitment of PBP1 to the division complex. Not essential for septum formation. This chain is Cell cycle protein GpsB, found in Streptococcus pneumoniae (strain Hungary19A-6).